Consider the following 213-residue polypeptide: Probable anti-sigma-F factor NrsF (213 aa).

6 consecutive transmembrane segments (helical) span residues A27–V47, L51–A71, V91–I111, T126–L146, L159–H179, and F187–G207.

This sequence belongs to the NrsF anti-sigma-F factor family.

It is found in the cell inner membrane. In terms of biological role, probably an anti-sigma factor for extracytoplasmic function (ECF) sigma factor sigma-F (SigF), which responds to (hypo)chlorite. ECF sigma factors are held in an inactive form by a cognate anti-sigma factor. This is Probable anti-sigma-F factor NrsF from Azospira oryzae (strain ATCC BAA-33 / DSM 13638 / PS) (Dechlorosoma suillum).